Consider the following 196-residue polypeptide: ATP-dependent Clp protease proteolytic subunit (196 aa).

S96 acts as the Nucleophile in catalysis. H121 is an active-site residue.

It belongs to the peptidase S14 family. In terms of assembly, fourteen ClpP subunits assemble into 2 heptameric rings which stack back to back to give a disk-like structure with a central cavity, resembling the structure of eukaryotic proteasomes.

The protein resides in the cytoplasm. The enzyme catalyses Hydrolysis of proteins to small peptides in the presence of ATP and magnesium. alpha-casein is the usual test substrate. In the absence of ATP, only oligopeptides shorter than five residues are hydrolyzed (such as succinyl-Leu-Tyr-|-NHMec, and Leu-Tyr-Leu-|-Tyr-Trp, in which cleavage of the -Tyr-|-Leu- and -Tyr-|-Trp bonds also occurs).. Its function is as follows. Cleaves peptides in various proteins in a process that requires ATP hydrolysis. Has a chymotrypsin-like activity. Plays a major role in the degradation of misfolded proteins. The sequence is that of ATP-dependent Clp protease proteolytic subunit from Streptococcus equi subsp. zooepidemicus (strain H70).